A 287-amino-acid chain; its full sequence is Thymidylate synthase (287 aa).

Residue Arg21 participates in dUMP binding. Position 51 (Asn51) interacts with (6R)-5,10-methylene-5,6,7,8-tetrahydrofolate. 150-151 (RR) is a binding site for dUMP. Cys170 serves as the catalytic Nucleophile. DUMP is bound by residues 190 to 193 (RSGD), Asn201, and 231 to 233 (HIY). Residue Asp193 coordinates (6R)-5,10-methylene-5,6,7,8-tetrahydrofolate. Ala286 contacts (6R)-5,10-methylene-5,6,7,8-tetrahydrofolate.

This sequence belongs to the thymidylate synthase family. Bacterial-type ThyA subfamily. In terms of assembly, homodimer.

It is found in the cytoplasm. The catalysed reaction is dUMP + (6R)-5,10-methylene-5,6,7,8-tetrahydrofolate = 7,8-dihydrofolate + dTMP. Its pathway is pyrimidine metabolism; dTTP biosynthesis. Catalyzes the reductive methylation of 2'-deoxyuridine-5'-monophosphate (dUMP) to 2'-deoxythymidine-5'-monophosphate (dTMP) while utilizing 5,10-methylenetetrahydrofolate (mTHF) as the methyl donor and reductant in the reaction, yielding dihydrofolate (DHF) as a by-product. This enzymatic reaction provides an intracellular de novo source of dTMP, an essential precursor for DNA biosynthesis. This is Thymidylate synthase from Mycoplasma genitalium (strain ATCC 33530 / DSM 19775 / NCTC 10195 / G37) (Mycoplasmoides genitalium).